A 330-amino-acid chain; its full sequence is ADP-L-glycero-D-manno-heptose-6-epimerase (330 aa).

NADP(+)-binding positions include 11-12, 32-33, Lys39, Lys54, 75-79, and Asn92; these read FI, DN, and EGACS. The active-site Proton acceptor is Tyr139. Residue Lys143 participates in NADP(+) binding. Asn168 is a substrate binding site. The NADP(+) site is built by Val169 and Lys177. The active-site Proton acceptor is Lys177. Residues Arg179, His186, 200-203, Arg213, and Tyr292 contribute to the substrate site; that span reads FGEY.

This sequence belongs to the NAD(P)-dependent epimerase/dehydratase family. HldD subfamily. In terms of assembly, homopentamer. Requires NADP(+) as cofactor.

It catalyses the reaction ADP-D-glycero-beta-D-manno-heptose = ADP-L-glycero-beta-D-manno-heptose. Its pathway is nucleotide-sugar biosynthesis; ADP-L-glycero-beta-D-manno-heptose biosynthesis; ADP-L-glycero-beta-D-manno-heptose from D-glycero-beta-D-manno-heptose 7-phosphate: step 4/4. In terms of biological role, catalyzes the interconversion between ADP-D-glycero-beta-D-manno-heptose and ADP-L-glycero-beta-D-manno-heptose via an epimerization at carbon 6 of the heptose. In Burkholderia ambifaria (strain ATCC BAA-244 / DSM 16087 / CCUG 44356 / LMG 19182 / AMMD) (Burkholderia cepacia (strain AMMD)), this protein is ADP-L-glycero-D-manno-heptose-6-epimerase.